The following is a 153-amino-acid chain: Transcriptional repressor NrdR (153 aa).

Residues Cys3–Cys34 fold into a zinc finger. One can recognise an ATP-cone domain in the interval Ile49–Gln139.

Belongs to the NrdR family. Zn(2+) serves as cofactor.

Functionally, negatively regulates transcription of bacterial ribonucleotide reductase nrd genes and operons by binding to NrdR-boxes. The sequence is that of Transcriptional repressor NrdR from Fervidobacterium nodosum (strain ATCC 35602 / DSM 5306 / Rt17-B1).